A 355-amino-acid polypeptide reads, in one-letter code: S-methyl-5'-thioadenosine phosphorylase (355 aa).

Residues T45, 91 to 92, and 124 to 125 contribute to the phosphate site; these read RH and SA. M226 is a binding site for substrate. S227 lines the phosphate pocket. 250–252 is a substrate binding site; the sequence is DYD.

It belongs to the PNP/MTAP phosphorylase family. MTAP subfamily. As to quaternary structure, homotrimer.

The protein localises to the cytoplasm. It is found in the nucleus. The catalysed reaction is S-methyl-5'-thioadenosine + phosphate = 5-(methylsulfanyl)-alpha-D-ribose 1-phosphate + adenine. It functions in the pathway amino-acid biosynthesis; L-methionine biosynthesis via salvage pathway; S-methyl-5-thio-alpha-D-ribose 1-phosphate from S-methyl-5'-thioadenosine (phosphorylase route): step 1/1. In terms of biological role, catalyzes the reversible phosphorylation of S-methyl-5'-thioadenosine (MTA) to adenine and 5-methylthioribose-1-phosphate. Involved in the breakdown of MTA, a major by-product of polyamine biosynthesis. Responsible for the first step in the methionine salvage pathway after MTA has been generated from S-adenosylmethionine. Has broad substrate specificity with 6-aminopurine nucleosides as preferred substrates. The chain is S-methyl-5'-thioadenosine phosphorylase from Emericella nidulans (strain FGSC A4 / ATCC 38163 / CBS 112.46 / NRRL 194 / M139) (Aspergillus nidulans).